Consider the following 154-residue polypeptide: Protein X (154 aa).

The tract at residues 68 to 117 (PCALRFTSARRMETTVNTHMILPKVLHKRTLGLPAMSTIDLEAYFKDCLF) is mitochondrial targeting sequence.

It belongs to the orthohepadnavirus protein X family. In terms of assembly, may form homodimer. May interact with host CEBPA, CFLAR, CREB1, DDB1, E4F1, HBXIP, HSPD1/HSP60, NFKBIA, POLR2E and SMAD4. Interacts with host SMC5-SMC6 complex and induces its degradation. Interacts with host TRPC4AP; leading to prevent ubiquitination of TRPC4AP. Interacts with host PLSCR1; this interaction promotes ubiquitination and degradation of HBx and impairs HBx-mediated cell proliferation. A fraction may be phosphorylated in insect cells and HepG2 cells, a human hepatoblastoma cell line. Phosphorylated in vitro by host protein kinase C or mitogen-activated protein kinase. N-acetylated in insect cells.

It is found in the host cytoplasm. It localises to the host nucleus. The protein localises to the host mitochondrion. Functionally, multifunctional protein that plays a role in silencing host antiviral defenses and promoting viral transcription. Does not seem to be essential for HBV infection. May be directly involved in development of cirrhosis and liver cancer (hepatocellular carcinoma). Most of cytosolic activities involve modulation of cytosolic calcium. The effect on apoptosis is controversial depending on the cell types in which the studies have been conducted. May induce apoptosis by localizing in mitochondria and causing loss of mitochondrial membrane potential. May also modulate apoptosis by binding host CFLAR, a key regulator of the death-inducing signaling complex (DISC). Promotes viral transcription by using the host E3 ubiquitin ligase DDB1 to target the SMC5-SMC6 complex to proteasomal degradation. This host complex would otherwise bind to viral episomal DNA, and prevents its transcription. Moderately stimulates transcription of many different viral and cellular transcription elements. Promoters and enhancers stimulated by HBx contain DNA binding sites for NF-kappa-B, AP-1, AP-2, c-EBP, ATF/CREB, or the calcium-activated factor NF-AT. This is Protein X from Hepatitis B virus genotype C subtype ayw (isolate Australia/AustRC/1992) (HBV-C).